The following is a 137-amino-acid chain: Bacteriohemerythrin (137 aa).

Fe cation-binding residues include histidine 21, histidine 53, glutamate 57, histidine 72, histidine 76, histidine 112, and aspartate 117.

This sequence belongs to the hemerythrin family. Monomer.

Its function is as follows. Oxygen-binding protein. May be involved in a storage mechanism or for delivery to oxygen-requiring enzymes. The oxygen-binding site contains two iron atoms. This chain is Bacteriohemerythrin, found in Ralstonia nicotianae (strain ATCC BAA-1114 / GMI1000) (Ralstonia solanacearum).